A 400-amino-acid polypeptide reads, in one-letter code: Deoxyguanosinetriphosphate triphosphohydrolase-like protein (400 aa).

One can recognise an HD domain in the interval 73–215 (RLTHSIEVSQ…AAIADDIAYN (143 aa)).

Belongs to the dGTPase family. Type 2 subfamily.

The sequence is that of Deoxyguanosinetriphosphate triphosphohydrolase-like protein from Bartonella tribocorum (strain CIP 105476 / IBS 506).